Reading from the N-terminus, the 191-residue chain is Fe/S biogenesis protein NfuA (191 aa).

2 residues coordinate [4Fe-4S] cluster: Cys149 and Cys152.

Belongs to the NfuA family. Homodimer. It depends on [4Fe-4S] cluster as a cofactor.

In terms of biological role, involved in iron-sulfur cluster biogenesis. Binds a 4Fe-4S cluster, can transfer this cluster to apoproteins, and thereby intervenes in the maturation of Fe/S proteins. Could also act as a scaffold/chaperone for damaged Fe/S proteins. This chain is Fe/S biogenesis protein NfuA, found in Salmonella choleraesuis (strain SC-B67).